Consider the following 136-residue polypeptide: Protein NrdI (136 aa).

The protein belongs to the NrdI family.

Functionally, probably involved in ribonucleotide reductase function. The chain is Protein NrdI from Salmonella dublin (strain CT_02021853).